A 508-amino-acid chain; its full sequence is Protein NODULATION SIGNALING PATHWAY 2 (508 aa).

A disordered region spans residues 75 to 98 (ITTTTTTTTTTDEEEEEMETTTTT). A GRAS domain is found at 108-500 (VGDDSKGLKL…RRLLSASLWT (393 aa)). The tract at residues 115–190 (LKLVHLLMAG…NNHHHHNNNK (76 aa)) is leucine repeat I (LRI). A VHIID region spans residues 209-273 (FQLLQDMSPY…NNGPHLRITA (65 aa)). A VHIID motif is present at residues 240–244 (VHVID). The tract at residues 289–321 (ETGRRLTSFAASLGQPFSFHHCRLDSDETFRPS) is leucine repeat II (LRII). The segment at 331–422 (LVFNCMLNLP…RVFFGPRIAG (92 aa)) is PFYRE. An SAW region spans residues 425–500 (GRIYRTGGEE…RRLLSASLWT (76 aa)).

This sequence belongs to the GRAS family. As to quaternary structure, interacts with RAM1. Interacts with IPN2 and RAD1. Expressed in roots, shoots and leaves.

The protein localises to the nucleus membrane. It localises to the endoplasmic reticulum. In terms of biological role, transcriptional regulator essential for Nod-factor-induced gene expression. Acts downstream of calcium spiking and DMI3, a calcium/calmodulin-dependent protein kinase (CCaMK). Transcription factor involved in the control of strigolactone biosynthesis in roots through the activation of the beta-carotene isomerase D27, which participates in a pathway leading to biosynthesis of strigolactones. This chain is Protein NODULATION SIGNALING PATHWAY 2, found in Medicago truncatula (Barrel medic).